A 270-amino-acid polypeptide reads, in one-letter code: Tetraspanin-17 (270 aa).

The Cytoplasmic portion of the chain corresponds to 1–19 (MPGKHQHFQEPEVGCCGKY). Residues 20-40 (FLFGFNIVFWVLGALFLAIGL) traverse the membrane as a helical segment. Over 41–63 (WAWGEKGVLSNISALTDLGGLDP) the chain is Extracellular. Asparagine 51 is a glycosylation site (N-linked (GlcNAc...) asparagine). The helical transmembrane segment at 64 to 84 (VWLFVVVGGVMSVLGFAGCIG) threads the bilayer. Topologically, residues 85 to 94 (ALRENTFLLK) are cytoplasmic. Residues 95 to 115 (FFSVFLGLIFFLELATGILAF) form a helical membrane-spanning segment. At 116 to 234 (VFKDWIRDQL…GQFEKWLQDN (119 aa)) the chain is on the extracellular side. Intrachain disulfides connect cysteine 155-cysteine 223, cysteine 156-cysteine 188, cysteine 172-cysteine 182, and cysteine 189-cysteine 202. The N-linked (GlcNAc...) asparagine glycan is linked to asparagine 171. The chain crosses the membrane as a helical span at residues 235–255 (LIVVAGVFMGIALLQIFGICL). Residues 256 to 270 (AQNLVSDIKAVKANW) lie on the Cytoplasmic side of the membrane.

It belongs to the tetraspanin (TM4SF) family. In terms of assembly, interacts with ADAM10; the interaction influences ADAM10 substrate specificity, endocytosis and turnover.

The protein resides in the cell membrane. Functionally, part of TspanC8 subgroup, composed of 6 members that interact with the transmembrane metalloprotease ADAM10. This interaction is required for ADAM10 exit from the endoplasmic reticulum and for enzymatic maturation and trafficking to the cell surface as well as substrate specificity. Different TspanC8/ADAM10 complexes have distinct substrates. Seems to regulate VE-cadherin expression in endothelial cells probably through interaction with ADAM10, promoting leukocyte transmigration. The sequence is that of Tetraspanin-17 from Homo sapiens (Human).